Consider the following 140-residue polypeptide: L-fucose mutarotase (140 aa).

Histidine 22 (proton donor) is an active-site residue. Residues aspartate 30, arginine 107, and 129–131 (YGN) each bind substrate.

It belongs to the RbsD / FucU family. FucU mutarotase subfamily. Homodecamer.

It localises to the cytoplasm. The catalysed reaction is alpha-L-fucose = beta-L-fucose. Its pathway is carbohydrate metabolism; L-fucose metabolism. Involved in the anomeric conversion of L-fucose. This chain is L-fucose mutarotase, found in Salmonella arizonae (strain ATCC BAA-731 / CDC346-86 / RSK2980).